Here is a 238-residue protein sequence, read N- to C-terminus: Pyridoxine 5'-phosphate synthase (238 aa).

Residue asparagine 9 participates in 3-amino-2-oxopropyl phosphate binding. Residue 11 to 12 (DH) participates in 1-deoxy-D-xylulose 5-phosphate binding. Arginine 20 provides a ligand contact to 3-amino-2-oxopropyl phosphate. The active-site Proton acceptor is histidine 45. Residues arginine 47 and histidine 52 each contribute to the 1-deoxy-D-xylulose 5-phosphate site. Catalysis depends on glutamate 72, which acts as the Proton acceptor. Threonine 102 contacts 1-deoxy-D-xylulose 5-phosphate. Histidine 189 (proton donor) is an active-site residue. 3-amino-2-oxopropyl phosphate is bound by residues glycine 190 and 211–212 (GH).

This sequence belongs to the PNP synthase family. Homooctamer; tetramer of dimers.

It localises to the cytoplasm. It catalyses the reaction 3-amino-2-oxopropyl phosphate + 1-deoxy-D-xylulose 5-phosphate = pyridoxine 5'-phosphate + phosphate + 2 H2O + H(+). It functions in the pathway cofactor biosynthesis; pyridoxine 5'-phosphate biosynthesis; pyridoxine 5'-phosphate from D-erythrose 4-phosphate: step 5/5. In terms of biological role, catalyzes the complicated ring closure reaction between the two acyclic compounds 1-deoxy-D-xylulose-5-phosphate (DXP) and 3-amino-2-oxopropyl phosphate (1-amino-acetone-3-phosphate or AAP) to form pyridoxine 5'-phosphate (PNP) and inorganic phosphate. This is Pyridoxine 5'-phosphate synthase from Ehrlichia canis (strain Jake).